A 188-amino-acid polypeptide reads, in one-letter code: Elongation factor P (188 aa).

This sequence belongs to the elongation factor P family.

The protein localises to the cytoplasm. It functions in the pathway protein biosynthesis; polypeptide chain elongation. Involved in peptide bond synthesis. Stimulates efficient translation and peptide-bond synthesis on native or reconstituted 70S ribosomes in vitro. Probably functions indirectly by altering the affinity of the ribosome for aminoacyl-tRNA, thus increasing their reactivity as acceptors for peptidyl transferase. This is Elongation factor P (efp) from Rickettsia prowazekii (strain Madrid E).